Reading from the N-terminus, the 568-residue chain is 2-succinyl-5-enolpyruvyl-6-hydroxy-3-cyclohexene-1-carboxylate synthase (568 aa).

This sequence belongs to the TPP enzyme family. MenD subfamily. As to quaternary structure, homodimer. Mg(2+) serves as cofactor. It depends on Mn(2+) as a cofactor. The cofactor is thiamine diphosphate.

It carries out the reaction isochorismate + 2-oxoglutarate + H(+) = 5-enolpyruvoyl-6-hydroxy-2-succinyl-cyclohex-3-ene-1-carboxylate + CO2. It participates in quinol/quinone metabolism; 1,4-dihydroxy-2-naphthoate biosynthesis; 1,4-dihydroxy-2-naphthoate from chorismate: step 2/7. Its pathway is quinol/quinone metabolism; menaquinone biosynthesis. Its function is as follows. Catalyzes the thiamine diphosphate-dependent decarboxylation of 2-oxoglutarate and the subsequent addition of the resulting succinic semialdehyde-thiamine pyrophosphate anion to isochorismate to yield 2-succinyl-5-enolpyruvyl-6-hydroxy-3-cyclohexene-1-carboxylate (SEPHCHC). In Haemophilus influenzae (strain 86-028NP), this protein is 2-succinyl-5-enolpyruvyl-6-hydroxy-3-cyclohexene-1-carboxylate synthase.